Here is a 551-residue protein sequence, read N- to C-terminus: Nicotianamine aminotransferase B (551 aa).

Positions K24–E127 are disordered. Positions G86 to A96 are enriched in basic and acidic residues. Over residues A111–A123 the composition is skewed to low complexity. K379 bears the N6-(pyridoxal phosphate)lysine mark.

This sequence belongs to the class-I pyridoxal-phosphate-dependent aminotransferase family. The cofactor is pyridoxal 5'-phosphate. Expressed in roots, but not in leaves.

The catalysed reaction is nicotianamine + 2-oxoglutarate = 3''-deamino-3''-oxonicotianamine + L-glutamate. Functionally, involved in biosynthesis of mugineic acid family phytosiderophores. This chain is Nicotianamine aminotransferase B, found in Hordeum vulgare (Barley).